The chain runs to 481 residues: Probable myosin light chain kinase DDB_G0284661 (481 aa).

One can recognise a Protein kinase domain in the interval Tyr-13–Ile-269. Residues Ile-19–Val-27 and Lys-43 each bind ATP. The Proton acceptor role is filled by Asp-136. Disordered regions lie at residues Pro-285–Lys-315 and Ser-345–Glu-427. Over residues Ser-379–Phe-421 the composition is skewed to low complexity.

This sequence belongs to the protein kinase superfamily. CAMK Ser/Thr protein kinase family. CaMK subfamily.

The catalysed reaction is L-seryl-[myosin light chain] + ATP = O-phospho-L-seryl-[myosin light chain] + ADP + H(+). The enzyme catalyses L-threonyl-[myosin light chain] + ATP = O-phospho-L-threonyl-[myosin light chain] + ADP + H(+). Its activity is regulated as follows. Does not have a calmodulin-binding domain. May phosphorylate a specific serine in the N-terminus of a myosin light chain. In Dictyostelium discoideum (Social amoeba), this protein is Probable myosin light chain kinase DDB_G0284661.